The chain runs to 293 residues: 3-methyl-2-oxobutanoate hydroxymethyltransferase (293 aa).

Residues 1–29 (MTAAHDRSENQPGRPGGETTAPYGSAPRR) are disordered. 2 residues coordinate Mg(2+): Asp73 and Asp112. Residues 73-74 (DS), Asp112, and Lys142 each bind 3-methyl-2-oxobutanoate. Residue Glu144 participates in Mg(2+) binding. The active-site Proton acceptor is the Glu210.

This sequence belongs to the PanB family. In terms of assembly, homodecamer; pentamer of dimers. Mg(2+) serves as cofactor.

The protein localises to the cytoplasm. It catalyses the reaction 3-methyl-2-oxobutanoate + (6R)-5,10-methylene-5,6,7,8-tetrahydrofolate + H2O = 2-dehydropantoate + (6S)-5,6,7,8-tetrahydrofolate. It functions in the pathway cofactor biosynthesis; (R)-pantothenate biosynthesis; (R)-pantoate from 3-methyl-2-oxobutanoate: step 1/2. In terms of biological role, catalyzes the reversible reaction in which hydroxymethyl group from 5,10-methylenetetrahydrofolate is transferred onto alpha-ketoisovalerate to form ketopantoate. This Saccharopolyspora erythraea (strain ATCC 11635 / DSM 40517 / JCM 4748 / NBRC 13426 / NCIMB 8594 / NRRL 2338) protein is 3-methyl-2-oxobutanoate hydroxymethyltransferase.